We begin with the raw amino-acid sequence, 350 residues long: MIRISIDAMGGDHGPEVTLPSLLRVAERRPDARFLIFGREDEARPVLDRLPALADVSDFTHCEVAVRMDDKPSQALRNGRWKSSMWKAIEAVKDGEADVCISAGNTGALMAMSKFCLRTMADIERPAIAAIWPTIRGESIVLDVGATIGADAQQLVDFAILGAAMANALFDIERPTVGLLNVGVEEIKGQEEVKEAGRMLREAALETMQYHGFVEGDDIGKGTVDVVVTEGFSGNIALKTAEGTARQIAEYLRAAMSRTLMARIGYIFARDAFQRLREKMDVRRTNGGVFLGLKGIVVKSHGAADEEGFAAAVELGYEMVKSGLLDKTRATLDLYHARRPVAPAGAVSNA.

This sequence belongs to the PlsX family. As to quaternary structure, homodimer. Probably interacts with PlsY.

The protein resides in the cytoplasm. The catalysed reaction is a fatty acyl-[ACP] + phosphate = an acyl phosphate + holo-[ACP]. It participates in lipid metabolism; phospholipid metabolism. Functionally, catalyzes the reversible formation of acyl-phosphate (acyl-PO(4)) from acyl-[acyl-carrier-protein] (acyl-ACP). This enzyme utilizes acyl-ACP as fatty acyl donor, but not acyl-CoA. The protein is Phosphate acyltransferase of Chelativorans sp. (strain BNC1).